Reading from the N-terminus, the 248-residue chain is MAGHSQFKNIMHRKGKQDAQRSKAFSKLAREITVAAKLGTPDPAMNPRLRAAVIAARQENMPKDNIERAIKKAIGGDSENYDEIRYEGYGPGGVAVIVEALTDNRNRAASDIRSYFTKSGGNLGETGSVSFMFDRTGVIEYDAGKASADDMLDAAIEAGADDVLSSEGGHEVFASQETFRDVAKALEAKFGEPRKAALIWKPQNTVAVDDETGEKLFKLMEHLNEHDDVQNVYANFEVSDALMAKMAG.

Residues 1-22 (MAGHSQFKNIMHRKGKQDAQRS) form a disordered region.

It belongs to the TACO1 family.

The protein resides in the cytoplasm. This chain is Probable transcriptional regulatory protein RPD_4171, found in Rhodopseudomonas palustris (strain BisB5).